A 131-amino-acid chain; its full sequence is Fatty acid-binding protein (131 aa).

Residues Arg-106 and Arg-126–Tyr-128 each bind (5Z,8Z,11Z,14Z)-eicosatetraenoate. (9Z)-octadecenoate-binding positions include Arg-106 and Arg-126–Tyr-128.

This sequence belongs to the calycin superfamily. Fatty-acid binding protein (FABP) family.

Its subcellular location is the cytoplasm. Its function is as follows. FABPs are thought to play a role in the intracellular transport of long-chain fatty acids and their acyl-CoA esters. The protein is Fatty acid-binding protein of Lepidoglyphus destructor (Storage mite).